The primary structure comprises 311 residues: Uridine phosphorylase 1 (311 aa).

Residues Gly61, Arg95, and 139–142 (RIGT) each bind phosphate. Residues 143-144 (SG) and 218-220 (QGR) each bind uridine.

It belongs to the PNP/UDP phosphorylase family. In terms of assembly, homodimer. In terms of processing, the N-terminus is blocked.

It carries out the reaction uridine + phosphate = alpha-D-ribose 1-phosphate + uracil. It catalyses the reaction 2'-deoxyuridine + phosphate = 2-deoxy-alpha-D-ribose 1-phosphate + uracil. Its pathway is pyrimidine metabolism; UMP biosynthesis via salvage pathway; uracil from uridine (phosphorylase route): step 1/1. With respect to regulation, strongly inhibited by 2,2'-anhydro-5-ethyluridine, a competitive inhibitor. Its function is as follows. Catalyzes the reversible phosphorylytic cleavage of uridine to uracil and ribose-1-phosphate which can then be utilized as carbon and energy sources or in the rescue of pyrimidine bases for nucleotide synthesis. Shows broad substrate specificity and can also accept deoxyuridine and other analogous compounds. The polypeptide is Uridine phosphorylase 1 (Mus musculus (Mouse)).